The following is a 258-amino-acid chain: Imidazole glycerol phosphate synthase subunit HisF (258 aa).

Residues aspartate 11 and aspartate 130 contribute to the active site.

It belongs to the HisA/HisF family. In terms of assembly, heterodimer of HisH and HisF.

It localises to the cytoplasm. It catalyses the reaction 5-[(5-phospho-1-deoxy-D-ribulos-1-ylimino)methylamino]-1-(5-phospho-beta-D-ribosyl)imidazole-4-carboxamide + L-glutamine = D-erythro-1-(imidazol-4-yl)glycerol 3-phosphate + 5-amino-1-(5-phospho-beta-D-ribosyl)imidazole-4-carboxamide + L-glutamate + H(+). The protein operates within amino-acid biosynthesis; L-histidine biosynthesis; L-histidine from 5-phospho-alpha-D-ribose 1-diphosphate: step 5/9. Functionally, IGPS catalyzes the conversion of PRFAR and glutamine to IGP, AICAR and glutamate. The HisF subunit catalyzes the cyclization activity that produces IGP and AICAR from PRFAR using the ammonia provided by the HisH subunit. The protein is Imidazole glycerol phosphate synthase subunit HisF of Xanthomonas oryzae pv. oryzae (strain MAFF 311018).